A 555-amino-acid chain; its full sequence is MSTSTFNRRWAGVILEALSRHGVRHLCIAPGSRSTPLTLAAAQHPAFTPHTHFDERGLGHLALGLAKASGEPVAVIVTSGTAVANLYPAVIEAGLTGEKLVVITADRPPELIDCGANQAIRQHSIFGSHPAATLDLPRPTPSIPAAWLISAIDETMGALAAGALHINTPFAEPLYGELDETDLTWQQAPGEWWQTTTPWLRYEKIQAVSAQADWPFWREQRGVVLAGRLTAQEGEAVAQWAARLGWPLIGDVLSQTGQPLPCADLWLAHPRAAALLAQAPVVVQFGGSLTGKRVLQWQSECRPQEYWVVDPLPGRLDPAHHRGRRIVADISAWLEQHPAHPMMPWDEPLEGLAAQTQRIVARELTEWGEAQVAHRLPELLPPDGQLFLGNSLTVRLVDALAQLPAGYPVYGNRGASGIDGLVSTAAGVQRATGKPTLAVLGDLSTLYDLNALALLRDAPAPFVLIVVNNNGGQIFSMLPTPAREREKFYCMPQNVCFAPAAAMFSLNYDAPESLAALKEAVTRAWRSSVATVIELRVPETAGAQVFSRLLKAVCA.

The protein belongs to the TPP enzyme family. MenD subfamily. As to quaternary structure, homodimer. It depends on Mg(2+) as a cofactor. Mn(2+) serves as cofactor. Thiamine diphosphate is required as a cofactor.

It catalyses the reaction isochorismate + 2-oxoglutarate + H(+) = 5-enolpyruvoyl-6-hydroxy-2-succinyl-cyclohex-3-ene-1-carboxylate + CO2. Its pathway is quinol/quinone metabolism; 1,4-dihydroxy-2-naphthoate biosynthesis; 1,4-dihydroxy-2-naphthoate from chorismate: step 2/7. It participates in quinol/quinone metabolism; menaquinone biosynthesis. Its function is as follows. Catalyzes the thiamine diphosphate-dependent decarboxylation of 2-oxoglutarate and the subsequent addition of the resulting succinic semialdehyde-thiamine pyrophosphate anion to isochorismate to yield 2-succinyl-5-enolpyruvyl-6-hydroxy-3-cyclohexene-1-carboxylate (SEPHCHC). The sequence is that of 2-succinyl-5-enolpyruvyl-6-hydroxy-3-cyclohexene-1-carboxylate synthase from Cronobacter sakazakii (strain ATCC BAA-894) (Enterobacter sakazakii).